We begin with the raw amino-acid sequence, 324 residues long: Quinolinate synthase (324 aa).

Positions 39 and 56 each coordinate iminosuccinate. Cysteine 101 provides a ligand contact to [4Fe-4S] cluster. Residues tyrosine 127–asparagine 129 and serine 144 each bind iminosuccinate. Cysteine 187 contributes to the [4Fe-4S] cluster binding site. Residues histidine 213–glutamate 215 and threonine 230 each bind iminosuccinate. Cysteine 280 provides a ligand contact to [4Fe-4S] cluster.

It belongs to the quinolinate synthase family. Type 2 subfamily. [4Fe-4S] cluster serves as cofactor.

The protein resides in the cytoplasm. The enzyme catalyses iminosuccinate + dihydroxyacetone phosphate = quinolinate + phosphate + 2 H2O + H(+). The protein operates within cofactor biosynthesis; NAD(+) biosynthesis; quinolinate from iminoaspartate: step 1/1. Functionally, catalyzes the condensation of iminoaspartate with dihydroxyacetone phosphate to form quinolinate. This chain is Quinolinate synthase, found in Nostoc punctiforme (strain ATCC 29133 / PCC 73102).